Consider the following 310-residue polypeptide: tRNA methyltransferase 10 homolog B (310 aa).

The stretch at 55–94 forms a coiled coil; it reads RKQRNWERRLEVKKSKRKEEKLRKKLNRQDKDVSDAQLSK. An SAM-dependent MTase TRM10-type domain is found at 101 to 298; that stretch reads TKERLEGARA…AGIPPGKGFV (198 aa).

This sequence belongs to the class IV-like SAM-binding methyltransferase superfamily. TRM10 family.

The catalysed reaction is guanosine(9) in tRNA + S-adenosyl-L-methionine = N(1)-methylguanosine(9) in tRNA + S-adenosyl-L-homocysteine + H(+). Its function is as follows. S-adenosyl-L-methionine-dependent guanine N(1)-methyltransferase that catalyzes the formation of N(1)-methylguanine at position 9 (m1G9) in tRNAs. Probably not able to catalyze formation of N(1)-methyladenine at position 9 (m1A9) in tRNAs. The sequence is that of tRNA methyltransferase 10 homolog B (trmt10b) from Danio rerio (Zebrafish).